The chain runs to 161 residues: Peptidyl-prolyl cis-trans isomerase-like 3 (161 aa).

At Ser-2 the chain carries N-acetylserine. Positions 2 to 154 constitute a PPIase cyclophilin-type domain; sequence SVTLHTDVGD…NDVHIKDITI (153 aa). Position 61 is an omega-N-methylarginine (Arg-61).

The protein belongs to the cyclophilin-type PPIase family. PPIL3 subfamily. Identified in the spliceosome C complex. As to expression, ubiquitous. Detected at low levels.

It carries out the reaction [protein]-peptidylproline (omega=180) = [protein]-peptidylproline (omega=0). Its function is as follows. PPIases accelerate the folding of proteins. It catalyzes the cis-trans isomerization of proline imidic peptide bonds in oligopeptides. May be involved in pre-mRNA splicing. The sequence is that of Peptidyl-prolyl cis-trans isomerase-like 3 (PPIL3) from Homo sapiens (Human).